The primary structure comprises 145 residues: Large ribosomal subunit protein uL15 (145 aa).

A disordered region spans residues 1 to 55 (MSLLKTLAPKAGSKHAPKRIGRGIGSGMGGTATKGHKGQLARTGGTVRRGFEGGQ). Over residues 12–21 (GSKHAPKRIG) the composition is skewed to basic residues. The span at 22–32 (RGIGSGMGGTA) shows a compositional bias: gly residues.

This sequence belongs to the universal ribosomal protein uL15 family. Part of the 50S ribosomal subunit.

Its function is as follows. Binds to the 23S rRNA. The polypeptide is Large ribosomal subunit protein uL15 (Bdellovibrio bacteriovorus (strain ATCC 15356 / DSM 50701 / NCIMB 9529 / HD100)).